The following is a 365-amino-acid chain: 2-aminoethylphosphonate--pyruvate transaminase (365 aa).

Lys194 carries the N6-(pyridoxal phosphate)lysine modification.

Belongs to the class-V pyridoxal-phosphate-dependent aminotransferase family. PhnW subfamily. In terms of assembly, homodimer. Requires pyridoxal 5'-phosphate as cofactor.

It catalyses the reaction (2-aminoethyl)phosphonate + pyruvate = phosphonoacetaldehyde + L-alanine. Involved in phosphonate degradation. The protein is 2-aminoethylphosphonate--pyruvate transaminase of Bacillus cereus (strain AH187).